A 281-amino-acid chain; its full sequence is Foldase protein PrsA (281 aa).

The N-terminal stretch at 1-18 (MKKWMMAAAVVSLMALSA) is a signal peptide. C19 carries N-palmitoyl cysteine lipidation. C19 carries the S-diacylglycerol cysteine lipid modification. The PpiC domain occupies 133–223 (KPKIRASHIL…YGYHIIKVTD (91 aa)).

It belongs to the PrsA family.

It localises to the cell membrane. The catalysed reaction is [protein]-peptidylproline (omega=180) = [protein]-peptidylproline (omega=0). Its function is as follows. Plays a major role in protein secretion by helping the post-translocational extracellular folding of several secreted proteins. This Geobacillus kaustophilus (strain HTA426) protein is Foldase protein PrsA.